A 215-amino-acid polypeptide reads, in one-letter code: 3-isopropylmalate dehydratase small subunit (215 aa).

It belongs to the LeuD family. LeuD type 1 subfamily. Heterodimer of LeuC and LeuD.

The enzyme catalyses (2R,3S)-3-isopropylmalate = (2S)-2-isopropylmalate. It functions in the pathway amino-acid biosynthesis; L-leucine biosynthesis; L-leucine from 3-methyl-2-oxobutanoate: step 2/4. Its function is as follows. Catalyzes the isomerization between 2-isopropylmalate and 3-isopropylmalate, via the formation of 2-isopropylmaleate. The chain is 3-isopropylmalate dehydratase small subunit from Xylella fastidiosa (strain 9a5c).